The primary structure comprises 148 residues: uncharacterized protein (148 aa).

This sequence belongs to the SufE family.

This is an uncharacterized protein from Rhizobium etli (strain ATCC 51251 / DSM 11541 / JCM 21823 / NBRC 15573 / CFN 42).